An 85-amino-acid polypeptide reads, in one-letter code: RNA-binding protein Hfq (85 aa).

In terms of domain architecture, Sm spans 9-68 (DPFLNELRKEKVPVSVFLVNGIKLHGIIDSFDQYVVMLKNSITQMVYKHAISTVVPSRMV).

This sequence belongs to the Hfq family. Homohexamer.

In terms of biological role, RNA chaperone that binds small regulatory RNA (sRNAs) and mRNAs to facilitate mRNA translational regulation in response to envelope stress, environmental stress and changes in metabolite concentrations. Also binds with high specificity to tRNAs. In Legionella pneumophila (strain Paris), this protein is RNA-binding protein Hfq.